We begin with the raw amino-acid sequence, 246 residues long: METKSSQTSHPWLVLLIFATFAVSIFAVYSNFPEVSADEKVHLKYPRNLEDAKQLGRVLSKYKENNYSVVLCGVIVVYVFLQSFAIPGSIFLTILSGYLFPFYVAIVLVCSCSATGAAICYTISKLFGRSFVLQKFPERIAKWQDDLSKHRDDFLNYMIFLRVTPIVPNWLINIASPVLDVPLAPFFWGTFLGVAPPSFLYIQAGSTLEQLSHTSVAWSWSSIVLLTGSAILSLAPILLKKKLKSD.

The next 6 membrane-spanning stretches (helical) occupy residues 12 to 32 (WLVLLIFATFAVSIFAVYSNF), 68 to 88 (SVVLCGVIVVYVFLQSFAIPG), 101 to 123 (PFYVAIVLVCSCSATGAAICYTI), 159 to 179 (IFLRVTPIVPNWLINIASPVL), 182 to 202 (PLAPFFWGTFLGVAPPSFLYI), and 219 to 239 (SWSSIVLLTGSAILSLAPILL).

Belongs to the TMEM41 family.

Its subcellular location is the membrane. In Caenorhabditis elegans, this protein is Transmembrane protein 41 homolog (tag-175).